A 597-amino-acid chain; its full sequence is Formate--tetrahydrofolate ligase (597 aa).

Position 84–91 (84–91) interacts with ATP; the sequence is TPLGEGKS.

It belongs to the formate--tetrahydrofolate ligase family.

The enzyme catalyses (6S)-5,6,7,8-tetrahydrofolate + formate + ATP = (6R)-10-formyltetrahydrofolate + ADP + phosphate. Its pathway is one-carbon metabolism; tetrahydrofolate interconversion. The polypeptide is Formate--tetrahydrofolate ligase (Dehalococcoides mccartyi (strain ATCC BAA-2266 / KCTC 15142 / 195) (Dehalococcoides ethenogenes (strain 195))).